A 250-amino-acid polypeptide reads, in one-letter code: 2,3-bisphosphoglycerate-dependent phosphoglycerate mutase (250 aa).

Residues 8–15 (RHGESTWN), 21–22 (TG), arginine 60, 87–90 (ERHY), lysine 98, and 114–115 (RR) contribute to the substrate site. The Tele-phosphohistidine intermediate role is filled by histidine 9. Catalysis depends on glutamate 87, which acts as the Proton donor/acceptor. The tract at residues 116-135 (SYDTPPPPLAANDPRSERSD) is disordered. 183–184 (GN) contributes to the substrate binding site.

This sequence belongs to the phosphoglycerate mutase family. BPG-dependent PGAM subfamily. In terms of assembly, homodimer.

The catalysed reaction is (2R)-2-phosphoglycerate = (2R)-3-phosphoglycerate. It functions in the pathway carbohydrate degradation; glycolysis; pyruvate from D-glyceraldehyde 3-phosphate: step 3/5. Catalyzes the interconversion of 2-phosphoglycerate and 3-phosphoglycerate. The sequence is that of 2,3-bisphosphoglycerate-dependent phosphoglycerate mutase from Polaromonas naphthalenivorans (strain CJ2).